Here is a 139-residue protein sequence, read N- to C-terminus: Putative pre-16S rRNA nuclease (139 aa).

It belongs to the YqgF nuclease family.

It is found in the cytoplasm. Functionally, could be a nuclease involved in processing of the 5'-end of pre-16S rRNA. This Streptococcus pyogenes serotype M49 (strain NZ131) protein is Putative pre-16S rRNA nuclease.